Here is a 191-residue protein sequence, read N- to C-terminus: Small ribosomal subunit protein eS7 (191 aa).

Methionine 1 bears the N-acetylmethionine mark.

The protein belongs to the eukaryotic ribosomal protein eS7 family.

The polypeptide is Small ribosomal subunit protein eS7 (RPS7) (Brassica oleracea (Wild cabbage)).